The primary structure comprises 240 residues: Adapter protein MecA (240 aa).

It belongs to the MecA family. Homodimer.

Its function is as follows. Enables the recognition and targeting of unfolded and aggregated proteins to the ClpC protease or to other proteins involved in proteolysis. The sequence is that of Adapter protein MecA from Streptococcus mutans serotype c (strain ATCC 700610 / UA159).